Consider the following 191-residue polypeptide: Putative manganese efflux pump MntP (191 aa).

A run of 6 helical transmembrane segments spans residues 3–23, 37–57, 65–85, 107–129, 144–164, and 169–189; these read PISILLIGFAMSTDAFAAAIG, LRAGIIFGVIEAITPIIGWLL, VEAFDHWIAFGLLGALGIHMI, WKLALTGFATSIDAMAVGIGLAF, CTLTMVTAGIMFGRVLGSMVG, and IIGGVILVIIGATILYEHLHG.

It belongs to the MntP (TC 9.B.29) family.

The protein localises to the cell inner membrane. In terms of biological role, probably functions as a manganese efflux pump. In Stenotrophomonas maltophilia (strain K279a), this protein is Putative manganese efflux pump MntP.